Here is a 224-residue protein sequence, read N- to C-terminus: Lipoprotein-releasing system ATP-binding protein LolD (224 aa).

Positions 5–224 (LVLDGLTKAY…VVRLEAGRVV (220 aa)) constitute an ABC transporter domain. 42 to 49 (APSGAGKS) contacts ATP.

Belongs to the ABC transporter superfamily. Lipoprotein translocase (TC 3.A.1.125) family. The complex is composed of two ATP-binding proteins (LolD) and two transmembrane proteins (LolC and LolE).

It localises to the cell inner membrane. In terms of biological role, part of the ABC transporter complex LolCDE involved in the translocation of mature outer membrane-directed lipoproteins, from the inner membrane to the periplasmic chaperone, LolA. Responsible for the formation of the LolA-lipoprotein complex in an ATP-dependent manner. This is Lipoprotein-releasing system ATP-binding protein LolD from Cereibacter sphaeroides (strain ATCC 17023 / DSM 158 / JCM 6121 / CCUG 31486 / LMG 2827 / NBRC 12203 / NCIMB 8253 / ATH 2.4.1.) (Rhodobacter sphaeroides).